Reading from the N-terminus, the 226-residue chain is ATP synthase subunit a (226 aa).

Transmembrane regions (helical) follow at residues 18–38, 79–99, 105–125, 134–154, 179–199, and 201–221; these read FITGFFVVLTAVLMFFISLGA, LAGTIALYVFFSNMIGIIPGF, SWSFTLVLALIVFFYYHFEGI, FAHFAGPVKWLAPFMFPIEII, LIMLLLVPWAVPVAPFMVLFF, and GILQAFVFMILTYVYLAGAVL.

Belongs to the ATPase A chain family. As to quaternary structure, F-type ATPases have 2 components, CF(1) - the catalytic core - and CF(0) - the membrane proton channel. CF(1) has five subunits: alpha(3), beta(3), gamma(1), delta(1), epsilon(1). CF(0) has three main subunits: a(1), b(2) and c(9-12). The alpha and beta chains form an alternating ring which encloses part of the gamma chain. CF(1) is attached to CF(0) by a central stalk formed by the gamma and epsilon chains, while a peripheral stalk is formed by the delta and b chains.

Its subcellular location is the cell inner membrane. Its function is as follows. Key component of the proton channel; it plays a direct role in the translocation of protons across the membrane. The polypeptide is ATP synthase subunit a (Helicobacter pylori (strain J99 / ATCC 700824) (Campylobacter pylori J99)).